Reading from the N-terminus, the 295-residue chain is 4-diphosphocytidyl-2-C-methyl-D-erythritol kinase (295 aa).

Residue lysine 22 is part of the active site. An ATP-binding site is contributed by 106 to 116; that stretch reads PAGGGFGGGSS. Aspartate 148 is a catalytic residue.

This sequence belongs to the GHMP kinase family. IspE subfamily.

The enzyme catalyses 4-CDP-2-C-methyl-D-erythritol + ATP = 4-CDP-2-C-methyl-D-erythritol 2-phosphate + ADP + H(+). It functions in the pathway isoprenoid biosynthesis; isopentenyl diphosphate biosynthesis via DXP pathway; isopentenyl diphosphate from 1-deoxy-D-xylulose 5-phosphate: step 3/6. Its function is as follows. Catalyzes the phosphorylation of the position 2 hydroxy group of 4-diphosphocytidyl-2C-methyl-D-erythritol. In Xanthomonas axonopodis pv. citri (strain 306), this protein is 4-diphosphocytidyl-2-C-methyl-D-erythritol kinase.